The primary structure comprises 271 residues: ATP synthase subunit a (271 aa).

Transmembrane regions (helical) follow at residues 38-58 (FWTL…LFLL), 100-120 (LIAP…LMDL), 146-166 (DVNI…FYSI), 220-240 (LIFI…LNVP), and 242-262 (AIFH…LTIV).

This sequence belongs to the ATPase A chain family. F-type ATPases have 2 components, CF(1) - the catalytic core - and CF(0) - the membrane proton channel. CF(1) has five subunits: alpha(3), beta(3), gamma(1), delta(1), epsilon(1). CF(0) has three main subunits: a(1), b(2) and c(9-12). The alpha and beta chains form an alternating ring which encloses part of the gamma chain. CF(1) is attached to CF(0) by a central stalk formed by the gamma and epsilon chains, while a peripheral stalk is formed by the delta and b chains.

It localises to the cell inner membrane. In terms of biological role, key component of the proton channel; it plays a direct role in the translocation of protons across the membrane. The chain is ATP synthase subunit a from Citrobacter koseri (strain ATCC BAA-895 / CDC 4225-83 / SGSC4696).